The sequence spans 317 residues: ADIPOR-like receptor IZH2 (317 aa).

Over 1 to 78 (MSTLLERTKS…TFKSLFYLHN (78 aa)) the chain is Cytoplasmic. The helical transmembrane segment at 79–99 (ESVNIYSHLIPALGFFTVLLL) threads the bilayer. Residues 100 to 110 (DKSTIKVFATT) lie on the Extracellular side of the membrane. The chain crosses the membrane as a helical span at residues 111 to 131 (TWLDHMVIDLFYSGAFACLIL). Residues 132-153 (SSSFHCLKSHSLRIATLGNKLD) lie on the Cytoplasmic side of the membrane. Residues 154-174 (YLGICILIVTSMVSILYYGYF) traverse the membrane as a helical segment. Residues 175–176 (EK) are Extracellular-facing. A helical membrane pass occupies residues 177-197 (FSLFCLFALITVSFGIACSIV). Topologically, residues 198–212 (SLKDKFRKREWRPYR) are cytoplasmic. Residues 213–233 (AGLFVCFGLSSIIPIFSGLYC) form a helical membrane-spanning segment. Residues 234–242 (YSFSEIWTQ) lie on the Extracellular side of the membrane. Residues 243 to 263 (IQLFWVLLGGVLYIIGAVLYG) traverse the membrane as a helical segment. Residues 264 to 276 (MRFPEKICPGKFD) lie on the Cytoplasmic side of the membrane. A helical transmembrane segment spans residues 277–297 (IWGHSHQLFHFLVVIAALCHL). Residues 298–317 (RGLLNSYELVHIKMENGIVS) lie on the Extracellular side of the membrane.

Belongs to the ADIPOR family.

It is found in the membrane. Functionally, probable receptor, which is involved in metabolic pathways that regulate lipid metabolism such as fatty acid oxidation. The chain is ADIPOR-like receptor IZH2 (IZH2) from Saccharomyces cerevisiae (strain ATCC 204508 / S288c) (Baker's yeast).